The chain runs to 141 residues: Hemoglobin subunit alpha-A (141 aa).

The 141-residue stretch at 1 to 141 folds into the Globin domain; sequence VLSAADKTNV…VGTVLTAKYR (141 aa). Histidine 58 provides a ligand contact to O2. Residue histidine 87 coordinates heme b.

This sequence belongs to the globin family. In terms of assembly, heterotetramer of two alpha chains and two beta chains. Red blood cells.

Involved in oxygen transport from the lung to the various peripheral tissues. This is Hemoglobin subunit alpha-A (HBAA) from Branta canadensis (Canada goose).